The following is a 394-amino-acid chain: Phosphopentomutase (394 aa).

6 residues coordinate Mn(2+): Asp15, Asp288, His293, Asp329, His330, and His341.

Belongs to the phosphopentomutase family. Mn(2+) is required as a cofactor.

The protein localises to the cytoplasm. The catalysed reaction is 2-deoxy-alpha-D-ribose 1-phosphate = 2-deoxy-D-ribose 5-phosphate. It catalyses the reaction alpha-D-ribose 1-phosphate = D-ribose 5-phosphate. It functions in the pathway carbohydrate degradation; 2-deoxy-D-ribose 1-phosphate degradation; D-glyceraldehyde 3-phosphate and acetaldehyde from 2-deoxy-alpha-D-ribose 1-phosphate: step 1/2. Isomerase that catalyzes the conversion of deoxy-ribose 1-phosphate (dRib-1-P) and ribose 1-phosphate (Rib-1-P) to deoxy-ribose 5-phosphate (dRib-5-P) and ribose 5-phosphate (Rib-5-P), respectively. This is Phosphopentomutase (drm) from Bacillus subtilis (strain 168).